A 710-amino-acid chain; its full sequence is E3 ubiquitin-protein ligase TRIM9 (710 aa).

An RING-type zinc finger spans residues 10-50 (CPVCGSFYREPIILPCSHNLCQACARNILVQTPESESPQSH). A Phosphothreonine modification is found at Thr41. Ser44, Ser46, and Ser49 each carry phosphoserine. 2 B box-type zinc fingers span residues 163–212 (AAAL…LVPP) and 224–266 (RKVS…VKAL). The Zn(2+) site is built by Cys168, Cys171, Cys193, His198, Cys229, His232, Cys252, and His258. The stretch at 273-340 (HKSQLSQALN…KAQLLARVNK (68 aa)) forms a coiled coil. The region spanning 374–432 (IKENDPSGFLQISDALIRRVHLTEDQWGKGTLTPRMTTDFDLSLDNSPLLQSIHQLDFV) is the COS domain. A Fibronectin type-III domain is found at 440-535 (VPATPILQLE…KTLVLQTSEV (96 aa)). The 170-residue stretch at 533–702 (SEVAWFAFDP…LHTGLPVPDF (170 aa)) folds into the B30.2/SPRY domain.

Belongs to the TRIM/RBCC family. In terms of assembly, interacts with SNAP25. In terms of processing, auto-ubiquitinated. Poly-ubiquitinated in cultured cells, whereas it is monoubiquitinated in vitro. In terms of tissue distribution, brain. Highly expressed in the cerebral cortex (at protein level). Severely decreased in the affected brain areas in Parkinson disease and dementia with Lewy bodies.

It is found in the cytoplasm. Its subcellular location is the cell projection. The protein localises to the dendrite. The protein resides in the cytoplasmic vesicle. It localises to the secretory vesicle. It is found in the synaptic vesicle. Its subcellular location is the synapse. The protein localises to the cytoskeleton. It carries out the reaction S-ubiquitinyl-[E2 ubiquitin-conjugating enzyme]-L-cysteine + [acceptor protein]-L-lysine = [E2 ubiquitin-conjugating enzyme]-L-cysteine + N(6)-ubiquitinyl-[acceptor protein]-L-lysine.. The protein operates within protein modification; protein ubiquitination. E3 ubiquitin-protein ligase which ubiquitinates itself in cooperation with an E2 enzyme UBE2D2/UBC4 and serves as a targeting signal for proteasomal degradation. May play a role in regulation of neuronal functions and may also participate in the formation or breakdown of abnormal inclusions in neurodegenerative disorders. May act as a regulator of synaptic vesicle exocytosis by controlling the availability of SNAP25 for the SNARE complex formation. This is E3 ubiquitin-protein ligase TRIM9 (TRIM9) from Homo sapiens (Human).